Reading from the N-terminus, the 274-residue chain is Glutamate racemase (274 aa).

Substrate is bound by residues 9–10 and 41–42; these read DS and YG. The Proton donor/acceptor role is filled by cysteine 73. 74 to 75 serves as a coordination point for substrate; that stretch reads NT. Cysteine 183 serves as the catalytic Proton donor/acceptor. 184–185 lines the substrate pocket; sequence TH.

It belongs to the aspartate/glutamate racemases family.

It catalyses the reaction L-glutamate = D-glutamate. It functions in the pathway cell wall biogenesis; peptidoglycan biosynthesis. Functionally, provides the (R)-glutamate required for cell wall biosynthesis. This Shewanella baltica (strain OS195) protein is Glutamate racemase.